The primary structure comprises 198 residues: Ribosome maturation factor RimM (198 aa).

A PRC barrel domain is found at 92–168 (DDEYYHADLI…IELPAEIEGE (77 aa)). Residues 163–172 (AEIEGEDQDS) show a composition bias toward acidic residues. The tract at residues 163–198 (AEIEGEDQDSSDNAGSPEGDAAASNSARHPRESGDP) is disordered.

Belongs to the RimM family. As to quaternary structure, binds ribosomal protein uS19.

It is found in the cytoplasm. An accessory protein needed during the final step in the assembly of 30S ribosomal subunit, possibly for assembly of the head region. Essential for efficient processing of 16S rRNA. May be needed both before and after RbfA during the maturation of 16S rRNA. It has affinity for free ribosomal 30S subunits but not for 70S ribosomes. The protein is Ribosome maturation factor RimM of Bradyrhizobium sp. (strain BTAi1 / ATCC BAA-1182).